We begin with the raw amino-acid sequence, 544 residues long: Chaperonin GroEL 2 (544 aa).

ATP contacts are provided by residues 30–33 (TLGP), Lys-51, 87–91 (DGTTT), Gly-415, and Asp-496.

This sequence belongs to the chaperonin (HSP60) family. Forms a cylinder of 14 subunits composed of two heptameric rings stacked back-to-back. Interacts with the co-chaperonin GroES.

It is found in the cytoplasm. The catalysed reaction is ATP + H2O + a folded polypeptide = ADP + phosphate + an unfolded polypeptide.. Functionally, together with its co-chaperonin GroES, plays an essential role in assisting protein folding. The GroEL-GroES system forms a nano-cage that allows encapsulation of the non-native substrate proteins and provides a physical environment optimized to promote and accelerate protein folding. The chain is Chaperonin GroEL 2 from Rhizobium johnstonii (strain DSM 114642 / LMG 32736 / 3841) (Rhizobium leguminosarum bv. viciae).